A 406-amino-acid polypeptide reads, in one-letter code: Multifunctional CCA protein (406 aa).

The ATP site is built by Gly-8 and Arg-11. CTP-binding residues include Gly-8 and Arg-11. Positions 21 and 23 each coordinate Mg(2+). 3 residues coordinate ATP: Arg-91, Arg-138, and Arg-141. Arg-91, Arg-138, and Arg-141 together coordinate CTP. The HD domain occupies Thr-229–Leu-331.

Belongs to the tRNA nucleotidyltransferase/poly(A) polymerase family. Bacterial CCA-adding enzyme type 1 subfamily. As to quaternary structure, monomer. Can also form homodimers and oligomers. Mg(2+) is required as a cofactor. It depends on Ni(2+) as a cofactor.

The catalysed reaction is a tRNA precursor + 2 CTP + ATP = a tRNA with a 3' CCA end + 3 diphosphate. It catalyses the reaction a tRNA with a 3' CCA end + 2 CTP + ATP = a tRNA with a 3' CCACCA end + 3 diphosphate. Catalyzes the addition and repair of the essential 3'-terminal CCA sequence in tRNAs without using a nucleic acid template. Adds these three nucleotides in the order of C, C, and A to the tRNA nucleotide-73, using CTP and ATP as substrates and producing inorganic pyrophosphate. tRNA 3'-terminal CCA addition is required both for tRNA processing and repair. Also involved in tRNA surveillance by mediating tandem CCA addition to generate a CCACCA at the 3' terminus of unstable tRNAs. While stable tRNAs receive only 3'-terminal CCA, unstable tRNAs are marked with CCACCA and rapidly degraded. The sequence is that of Multifunctional CCA protein from Stenotrophomonas maltophilia (strain K279a).